We begin with the raw amino-acid sequence, 134 residues long: Translation initiation factor 2 subunit beta (134 aa).

Residues 1 to 12 (MEYDDMLDRAME) are compositionally biased toward basic and acidic residues. The disordered stretch occupies residues 1 to 28 (MEYDDMLDRAMEETPEIDGTSERFEVPD).

This sequence belongs to the eIF-2-beta/eIF-5 family. Heterotrimer composed of an alpha, a beta and a gamma chain.

Its function is as follows. eIF-2 functions in the early steps of protein synthesis by forming a ternary complex with GTP and initiator tRNA. The protein is Translation initiation factor 2 subunit beta of Haloarcula marismortui (strain ATCC 43049 / DSM 3752 / JCM 8966 / VKM B-1809) (Halobacterium marismortui).